A 346-amino-acid polypeptide reads, in one-letter code: NSSLPTNISGGTPAVSAGYLFLDIITYLVYAVTFVLGVLGNGLVIWVAGFRMTHTVTTISYLNLAVADFCFTSTLPFFMVRKAMGGHWPFGWFLCKFIFTIVDINLFGSVFLIALIALDRCVCVLHPVWTQNHRTVSLAKKVIIGPWVMALLLTLPVIIRVTTVPGKMGTVSCTFNFSPWTNDPKERIKVAIAMLTVRGIIRFIIGFSAPMSIVAVSYGLIATKIHKQGLIKSSRPLRVLSFVAAAFFLCWSPYQVVAFIATVRIRELLQGMYKEISIAVDVTSALAFFNSCLNPMLYVFMGQDFRERLIHSLPASLERALTEASTQTSDTATNSTLPSAEVALQA.

N-linked (GlcNAc...) asparagine glycans are attached at residues asparagine 1 and asparagine 7. The Extracellular segment spans residues 1-24 (NSSLPTNISGGTPAVSAGYLFLDI). A helical membrane pass occupies residues 25–47 (ITYLVYAVTFVLGVLGNGLVIWV). Over 48–58 (AGFRMTHTVTT) the chain is Cytoplasmic. The helical transmembrane segment at 59–80 (ISYLNLAVADFCFTSTLPFFMV) threads the bilayer. Over 81–97 (RKAMGGHWPFGWFLCKF) the chain is Extracellular. Residues cysteine 95 and cysteine 173 are joined by a disulfide bond. Residues 98–118 (IFTIVDINLFGSVFLIALIAL) traverse the membrane as a helical segment. The Cytoplasmic portion of the chain corresponds to 119–137 (DRCVCVLHPVWTQNHRTVS). Residues 138 to 159 (LAKKVIIGPWVMALLLTLPVII) form a helical membrane-spanning segment. Over 160–202 (RVTTVPGKMGTVSCTFNFSPWTNDPKERIKVAIAMLTVRGIIR) the chain is Extracellular. The helical transmembrane segment at 203 to 223 (FIIGFSAPMSIVAVSYGLIAT) threads the bilayer. Over 224–239 (KIHKQGLIKSSRPLRV) the chain is Cytoplasmic. The helical transmembrane segment at 240–263 (LSFVAAAFFLCWSPYQVVAFIATV) threads the bilayer. Over 264-282 (RIRELLQGMYKEISIAVDV) the chain is Extracellular. A helical transmembrane segment spans residues 283 to 302 (TSALAFFNSCLNPMLYVFMG). Residues 303-346 (QDFRERLIHSLPASLERALTEASTQTSDTATNSTLPSAEVALQA) lie on the Cytoplasmic side of the membrane. Positions 324 to 338 (ASTQTSDTATNSTLP) are enriched in polar residues. Positions 324–346 (ASTQTSDTATNSTLPSAEVALQA) are disordered.

It belongs to the G-protein coupled receptor 1 family. Phosphorylated; which is necessary for desensitization.

The protein localises to the cell membrane. Its function is as follows. High affinity receptor for N-formyl-methionyl peptides (fMLP), which are powerful neutrophil chemotactic factors. Binding of fMLP to the receptor stimulates intracellular calcium mobilization and superoxide anion release. This response is mediated via a G-protein that activates a phosphatidylinositol-calcium second messenger system. Receptor for TAFA4, mediates its effects on chemoattracting macrophages, promoting phagocytosis and increasing ROS release. Receptor for cathepsin CTSG, leading to increased phagocyte chemotaxis. In Pongo pygmaeus (Bornean orangutan), this protein is fMet-Leu-Phe receptor (FPR1).